The following is a 366-amino-acid chain: tRNA/tmRNA (uracil-C(5))-methyltransferase (366 aa).

The S-adenosyl-L-methionine site is built by Q190, Y218, N223, E239, and D299. The Nucleophile role is filled by C324. E358 functions as the Proton acceptor in the catalytic mechanism.

This sequence belongs to the class I-like SAM-binding methyltransferase superfamily. RNA M5U methyltransferase family. TrmA subfamily.

It carries out the reaction uridine(54) in tRNA + S-adenosyl-L-methionine = 5-methyluridine(54) in tRNA + S-adenosyl-L-homocysteine + H(+). It catalyses the reaction uridine(341) in tmRNA + S-adenosyl-L-methionine = 5-methyluridine(341) in tmRNA + S-adenosyl-L-homocysteine + H(+). Dual-specificity methyltransferase that catalyzes the formation of 5-methyluridine at position 54 (m5U54) in all tRNAs, and that of position 341 (m5U341) in tmRNA (transfer-mRNA). In Escherichia coli O17:K52:H18 (strain UMN026 / ExPEC), this protein is tRNA/tmRNA (uracil-C(5))-methyltransferase.